A 224-amino-acid chain; its full sequence is Cytidylate kinase (224 aa).

Position 11 to 19 (11 to 19 (GPAAAGKST)) interacts with ATP.

The protein belongs to the cytidylate kinase family. Type 1 subfamily.

It is found in the cytoplasm. It catalyses the reaction CMP + ATP = CDP + ADP. It carries out the reaction dCMP + ATP = dCDP + ADP. The sequence is that of Cytidylate kinase from Listeria monocytogenes serotype 4a (strain HCC23).